Here is a 477-residue protein sequence, read N- to C-terminus: Charged multivesicular body protein 7 (477 aa).

Coiled-coil stretches lie at residues 252–280 (KLQT…TIKE) and 382–428 (ESLS…QQQQ). Basic and acidic residues-rich tracts occupy residues 411 to 424 (EEKQ…KEKQ) and 465 to 477 (KQDE…SELI). The segment at 411–477 (EEKQKQKQIE…ENKQKTSELI (67 aa)) is disordered.

It belongs to the SNF7 family.

The protein resides in the cytoplasm. Its function is as follows. Plays a role in the endosomal sorting pathway. The sequence is that of Charged multivesicular body protein 7 (chmp7) from Dictyostelium discoideum (Social amoeba).